Here is a 315-residue protein sequence, read N- to C-terminus: Manganese-dependent 2,3-dihydroxybiphenyl 1,2-dioxygenase (315 aa).

VOC domains are found at residues 7–121 (KFGH…IYYD) and 150–273 (RIDH…LFSG). Positions 153, 216, and 269 each coordinate Mn(2+).

Belongs to the extradiol ring-cleavage dioxygenase family. As to quaternary structure, homotetramer. The cofactor is Mn(2+).

The enzyme catalyses biphenyl-2,3-diol + O2 = 2-hydroxy-6-oxo-6-phenylhexa-2,4-dienoate + H(+). The protein operates within xenobiotic degradation; biphenyl degradation; 2-hydroxy-2,4-pentadienoate and benzoate from biphenyl: step 3/4. In terms of biological role, catalyzes the meta-cleavage of the hydroxylated biphenyl ring. The enzyme can oxidize a wide range of substrates, and the substrate preference order is 2,3-dihydroxybiphenyl &gt; 3-methylcatechol &gt; catechol &gt; 4-methylcatechol &gt; 4-chlorocatechol. The polypeptide is Manganese-dependent 2,3-dihydroxybiphenyl 1,2-dioxygenase (bphC) (Geobacillus genomosp. 3).